Consider the following 107-residue polypeptide: Nucleoid-associated protein HNE_0371 (107 aa).

It belongs to the YbaB/EbfC family. As to quaternary structure, homodimer.

The protein localises to the cytoplasm. It is found in the nucleoid. In terms of biological role, binds to DNA and alters its conformation. May be involved in regulation of gene expression, nucleoid organization and DNA protection. The polypeptide is Nucleoid-associated protein HNE_0371 (Hyphomonas neptunium (strain ATCC 15444)).